The following is a 671-amino-acid chain: Alpha-1,4-glucan:maltose-1-phosphate maltosyltransferase (671 aa).

The alpha-maltose 1-phosphate site is built by Lys252, Gln312, and Asp347. The active-site Nucleophile is the Asp382. Alpha-maltose 1-phosphate is bound at residue Asn383. Residue Glu411 is the Proton donor of the active site. 521–522 provides a ligand contact to alpha-maltose 1-phosphate; that stretch reads KY.

The protein belongs to the glycosyl hydrolase 13 family. GlgE subfamily. Homodimer.

The enzyme catalyses alpha-maltose 1-phosphate + [(1-&gt;4)-alpha-D-glucosyl](n) = [(1-&gt;4)-alpha-D-glucosyl](n+2) + phosphate. Maltosyltransferase that uses maltose 1-phosphate (M1P) as the sugar donor to elongate linear or branched alpha-(1-&gt;4)-glucans. Is involved in a branched alpha-glucan biosynthetic pathway from trehalose, together with TreS, Mak and GlgB. This is Alpha-1,4-glucan:maltose-1-phosphate maltosyltransferase from Corynebacterium pseudotuberculosis (strain 1002).